A 128-amino-acid polypeptide reads, in one-letter code: LIM domain-containing protein 2 (128 aa).

Met1 is subject to N-acetylmethionine. The interval 1–25 (MFQAAGAAQATPSHEAKGSSGNSTV) is disordered. One can recognise an LIM zinc-binding domain in the interval 39-99 (ETCAACQKTV…KPHFQQLFKS (61 aa)). Zn(2+)-binding residues include Cys41, Cys44, His62, Cys65, Cys68, Cys71, Cys89, and His92.

Interacts with ILK.

It is found in the cytoplasm. Its subcellular location is the nucleus. In terms of biological role, acts as an activator of the protein-kinase ILK, thereby regulating cell motility. In Rattus norvegicus (Rat), this protein is LIM domain-containing protein 2 (Limd2).